The primary structure comprises 795 residues: Plakophilin-2 (795 aa).

The required for binding to single-stranded DNA stretch occupies residues 1–318 (MAVPGSLAEC…MTLERAVNML (318 aa)). Residue Ser44 is modified to Phosphoserine. Arg46 carries the post-translational modification Omega-N-methylarginine. 9 positions are modified to phosphoserine: Ser82, Ser132, Ser135, Ser151, Ser154, Ser155, Ser172, Ser188, and Ser232. Disordered regions lie at residues 197 to 233 (GTAR…SHSA) and 245 to 274 (SQAR…REPG). The segment covering 245–257 (SQARLQSTQSRTA) has biased composition (polar residues). Residues 258–268 (RSSWPRSSVRS) show a composition bias toward low complexity. Residues Ser265 and Ser287 each carry the phosphoserine modification. ARM repeat units lie at residues 299-339 (DAQL…QHES), 343-382 (SEAR…NLVF), 385-425 (NDNK…NLSS), 484-530 (PDGR…NLSY), 585-625 (PHGI…NLTA), 633-672 (LVAR…NLSR), 677-718 (QNEI…NLMQ), and 721-763 (YQNA…SLWA).

Belongs to the beta-catenin family. Interacts with DSC2. Interacts with JUP. Interacts with KRT5/CK5, KRT8/CK8, KRT14/CK14, KRT18/CK18 and VIM. Interacts (via N-terminus) with MARK3/C-TAK1. Interacts with DSP. Interacts with DSG1, DSG2 and DSG3. Interacts (via N-terminus) with CTNNB1. Interacts with CDH1. Interacts with the RNA polymerase III (Pol III) complex proteins POLR3A/RPC155, POLR3F/RPC39 and POLR3C/RPC82. Interacts with CTNNA3. Interacts (via N-terminus) with SCN5A/Nav1.5. Interacts with ANK3/ANKG and GJA1/CX43. In terms of tissue distribution, expressed in cardiomyocytes in the heart (at protein level).

It is found in the nucleus. Its subcellular location is the cell junction. The protein localises to the desmosome. It localises to the cytoplasm. In terms of biological role, a component of desmosome cell-cell junctions which are required for positive regulation of cellular adhesion. Regulates focal adhesion turnover resulting in changes in focal adhesion size, cell adhesion and cell spreading, potentially via transcriptional modulation of beta-integrins. Required to maintain gingival epithelial barrier function. Important component of the desmosome that is also required for localization of desmosome component proteins such as DSC2, DSG2 and JUP to the desmosome cell-cell junction. Required for the formation of desmosome cell junctions in cardiomyocytes, thereby required for the correct formation of the heart, specifically trabeculation and formation of the atria walls. Loss of desmosome cell junctions leads to mis-localization of DSP and DSG2 resulting in disruption of cell-cell adhesion and disordered intermediate filaments. Modulates profibrotic gene expression in cardiomyocytes via regulation of DSP expression and subsequent activation of downstream TGFB1 and MAPK14/p38 MAPK signaling. Required for cardiac sodium current propagation and electrical synchrony in cardiac myocytes, via ANK3 stabilization and modulation of SCN5A/Nav1.5 localization to cell-cell junctions. Required for mitochondrial function, nuclear envelope integrity and positive regulation of SIRT3 transcription via maintaining DES localization at its nuclear envelope and cell tip anchoring points, and thereby preserving regulation of the transcriptional program. Maintenance of nuclear envelope integrity protects against DNA damage and transcriptional dysregulation of genes, especially those involved in the electron transport chain, thereby preserving mitochondrial function and protecting against superoxide radical anion generation. Binds single-stranded DNA (ssDNA). May regulate the localization of GJA1 to gap junctions in intercalated disks of the heart. The sequence is that of Plakophilin-2 from Mus musculus (Mouse).